We begin with the raw amino-acid sequence, 122 residues long: Small ribosomal subunit protein uS13 (122 aa).

The segment at 95-122 (SLPVRGQRTHTNARTRKGPAKSIAGKKK) is disordered.

It belongs to the universal ribosomal protein uS13 family. Part of the 30S ribosomal subunit. Forms a loose heterodimer with protein S19. Forms two bridges to the 50S subunit in the 70S ribosome.

In terms of biological role, located at the top of the head of the 30S subunit, it contacts several helices of the 16S rRNA. In the 70S ribosome it contacts the 23S rRNA (bridge B1a) and protein L5 of the 50S subunit (bridge B1b), connecting the 2 subunits; these bridges are implicated in subunit movement. Contacts the tRNAs in the A and P-sites. This Mesorhizobium japonicum (strain LMG 29417 / CECT 9101 / MAFF 303099) (Mesorhizobium loti (strain MAFF 303099)) protein is Small ribosomal subunit protein uS13.